Consider the following 451-residue polypeptide: Glycine--tRNA ligase (451 aa).

Arg101 and Glu151 together coordinate substrate. ATP contacts are provided by residues 183–185, 193–198, 267–268, and 312–315; these read RNE, FRTCEF, EL, and GLTR. Residue 198-202 participates in substrate binding; that stretch reads FEQME. Position 308–312 (308–312) interacts with substrate; that stretch reads ETSAG.

Belongs to the class-II aminoacyl-tRNA synthetase family. In terms of assembly, homodimer.

It localises to the cytoplasm. It catalyses the reaction tRNA(Gly) + glycine + ATP = glycyl-tRNA(Gly) + AMP + diphosphate. Functionally, catalyzes the attachment of glycine to tRNA(Gly). This chain is Glycine--tRNA ligase, found in Treponema denticola (strain ATCC 35405 / DSM 14222 / CIP 103919 / JCM 8153 / KCTC 15104).